The primary structure comprises 333 residues: 5-formaminoimidazole-4-carboxamide-1-(beta)-D-ribofuranosyl 5'-monophosphate synthetase (333 aa).

2 residues coordinate 5-amino-1-(5-phospho-beta-D-ribosyl)imidazole-4-carboxamide: His9 and Ser73. One can recognise an ATP-grasp domain in the interval 94 to 324; the sequence is RNLFEWEANQ…ISREIKLAIN (231 aa). Residues 124 to 184 and Glu206 each bind ATP; that span reads PEDI…VPMY. Asn230 provides a ligand contact to 5-amino-1-(5-phospho-beta-D-ribosyl)imidazole-4-carboxamide. Mg(2+) is bound by residues Glu269 and Glu282.

The protein belongs to the phosphohexose mutase family. It depends on Mg(2+) as a cofactor. Requires Mn(2+) as cofactor.

The enzyme catalyses 5-amino-1-(5-phospho-beta-D-ribosyl)imidazole-4-carboxamide + formate + ATP = 5-formamido-1-(5-phospho-D-ribosyl)imidazole-4-carboxamide + ADP + phosphate. It participates in purine metabolism; IMP biosynthesis via de novo pathway; 5-formamido-1-(5-phospho-D-ribosyl)imidazole-4-carboxamide from 5-amino-1-(5-phospho-D-ribosyl)imidazole-4-carboxamide (formate route): step 1/1. Functionally, catalyzes the ATP- and formate-dependent formylation of 5-aminoimidazole-4-carboxamide-1-beta-d-ribofuranosyl 5'-monophosphate (AICAR) to 5-formaminoimidazole-4-carboxamide-1-beta-d-ribofuranosyl 5'-monophosphate (FAICAR) in the absence of folates. This is 5-formaminoimidazole-4-carboxamide-1-(beta)-D-ribofuranosyl 5'-monophosphate synthetase from Sulfurisphaera tokodaii (strain DSM 16993 / JCM 10545 / NBRC 100140 / 7) (Sulfolobus tokodaii).